The following is a 336-amino-acid chain: Zinc transporter ZIP11 (336 aa).

7 helical membrane passes run leucine 12 to phenylalanine 32, leucine 44 to isoleucine 64, serine 75 to alanine 95, isoleucine 188 to valine 208, tryptophan 258 to isoleucine 278, leucine 280 to valine 300, and leucine 316 to glycine 336.

Belongs to the ZIP transporter (TC 2.A.5) family.

The protein localises to the cell membrane. It localises to the nucleus. The protein resides in the cytoplasm. It is found in the golgi apparatus. Functions as a cellular zinc transporter. The protein is Zinc transporter ZIP11 (slc39a11) of Xenopus tropicalis (Western clawed frog).